Reading from the N-terminus, the 450-residue chain is Tubulin alpha-2 chain (450 aa).

Residue glutamine 11 participates in GTP binding. Position 40 is an N6-acetyllysine (lysine 40). GTP contacts are provided by glutamate 71, glycine 144, threonine 145, threonine 179, asparagine 206, and asparagine 228. Residue glutamate 71 coordinates Mg(2+). Glutamate 254 is an active-site residue.

It belongs to the tubulin family. In terms of assembly, dimer of alpha and beta chains. A typical microtubule is a hollow water-filled tube with an outer diameter of 25 nm and an inner diameter of 15 nM. Alpha-beta heterodimers associate head-to-tail to form protofilaments running lengthwise along the microtubule wall with the beta-tubulin subunit facing the microtubule plus end conferring a structural polarity. Microtubules usually have 13 protofilaments but different protofilament numbers can be found in some organisms and specialized cells. Mg(2+) serves as cofactor. In terms of processing, undergoes a tyrosination/detyrosination cycle, the cyclic removal and re-addition of a C-terminal tyrosine residue by the enzymes tubulin tyrosine carboxypeptidase (TTCP) and tubulin tyrosine ligase (TTL), respectively. Post-translationally, acetylation of alpha chains at Lys-40 stabilizes microtubules and affects affinity and processivity of microtubule motors. This modification has a role in multiple cellular functions, ranging from cell motility, cell cycle progression or cell differentiation to intracellular trafficking and signaling.

The protein localises to the cytoplasm. It localises to the cytoskeleton. It catalyses the reaction GTP + H2O = GDP + phosphate + H(+). Its function is as follows. Tubulin is the major constituent of microtubules, a cylinder consisting of laterally associated linear protofilaments composed of alpha- and beta-tubulin heterodimers. Microtubules grow by the addition of GTP-tubulin dimers to the microtubule end, where a stabilizing cap forms. Below the cap, tubulin dimers are in GDP-bound state, owing to GTPase activity of alpha-tubulin. The polypeptide is Tubulin alpha-2 chain (Gossypium hirsutum (Upland cotton)).